The sequence spans 588 residues: MELLWTPLLLVAACLSEVLGSPEIDTGINISQPLHILEDHNLMVLTPAGLTQTLNETRFLMVIFHNPSLKQSRKLAKELGKAAEIFGKGKNGLGFGKVDITKETELQQEFDITHAPELKLFFEGNRLKPISCKDVVESTALVVWLRRQISKKALLFNNSDEVADFVKSRPLVIVGFFQDLEEEVAELFYDTIKDFPELTFGAIQIKNSFGRFHVILDSVLVFKKGKIVKRQELINDSTNKDHLNQVIKQQLTGFVIELNPENKDLIYELNILNHMLLFISKSSEPYSTISRHYRQIAKEFQNKILFVLVNADEPKNKRIFEYFQISRVNVPSVQILNLSSDGRYKMPTDDINFESLKKFCNSFLSKTAKKHKASEEIPKYWDQGPVKKLVGKNFNVVVLDKEKDVFVMFYAPWSEKCRVLLPLLEELGIKYQNHSTVIIAKIDITANDIQLANPEQYPFFRLFPTDSQEAVMYKGEHTMKGFCDFLESHVKVRIEEEDELLYIEQNEEEEVLAEPEIQLIEKLPENPLLKIEDTSKQDRPVKESPVLDSIRKPEEPERRKETAEREAAAAQPKEQPKPERKLEVKEEL.

Residues 1-20 form the signal peptide; the sequence is MELLWTPLLLVAACLSEVLG. Asn-55, Asn-157, and Asn-337 each carry an N-linked (GlcNAc...) asparagine glycan. The 64-residue stretch at 385-448 folds into the Thioredoxin domain; it reads PVKKLVGKNF…IAKIDITAND (64 aa). 3 stretches are compositionally biased toward basic and acidic residues: residues 531-542, 549-567, and 574-588; these read IEDTSKQDRPVK, SIRK…EREA, and EQPK…KEEL. A disordered region spans residues 531 to 588; the sequence is IEDTSKQDRPVKESPVLDSIRKPEEPERRKETAEREAAAAQPKEQPKPERKLEVKEEL. The Prevents secretion from ER motif lies at 585 to 588; sequence KEEL.

Belongs to the protein disulfide isomerase family. As to quaternary structure, homodimer. The homodimer is not disulfide-linked. Interacts with CLGN and ERO1A. In terms of processing, N-glycosylated. Testis-specific (at protein level).

The protein resides in the endoplasmic reticulum. Probable redox-inactive chaperone involved in spermatogenesis. In Mus musculus (Mouse), this protein is Protein disulfide-isomerase-like protein of the testis (Pdilt).